Reading from the N-terminus, the 83-residue chain is Cytochrome b559 subunit alpha (83 aa).

The chain crosses the membrane as a helical span at residues isoleucine 21–tryptophan 35. Residue histidine 23 coordinates heme.

The protein belongs to the PsbE/PsbF family. Heterodimer of an alpha subunit and a beta subunit. PSII is composed of 1 copy each of membrane proteins PsbA, PsbB, PsbC, PsbD, PsbE, PsbF, PsbH, PsbI, PsbJ, PsbK, PsbL, PsbM, PsbT, PsbX, PsbY, PsbZ, Psb30/Ycf12, at least 3 peripheral proteins of the oxygen-evolving complex and a large number of cofactors. It forms dimeric complexes. Heme b serves as cofactor.

The protein localises to the plastid. It localises to the chloroplast thylakoid membrane. In terms of biological role, this b-type cytochrome is tightly associated with the reaction center of photosystem II (PSII). PSII is a light-driven water:plastoquinone oxidoreductase that uses light energy to abstract electrons from H(2)O, generating O(2) and a proton gradient subsequently used for ATP formation. It consists of a core antenna complex that captures photons, and an electron transfer chain that converts photonic excitation into a charge separation. The chain is Cytochrome b559 subunit alpha from Lotus japonicus (Lotus corniculatus var. japonicus).